The primary structure comprises 507 residues: Keratin, type II cuticular Hb5 (507 aa).

The segment at 1–123 (MSCRSYRISP…PNAQCVKYEE (123 aa)) is head. Residues 123–434 (EKEQIKCLNS…RLLEGEEQRL (312 aa)) enclose the IF rod domain. A coil 1A region spans residues 124 to 158 (KEQIKCLNSKFAAFIDKVRFLEQQNKLLETKWQFY). Positions 159-168 (QNRKCCESNL) are linker 1. The tract at residues 169 to 269 (EPLFGGYIEA…YEEEVCVLQA (101 aa)) is coil 1B. A Glycyl lysine isopeptide (Lys-Gly) (interchain with G-Cter in SUMO1) cross-link involves residue Lys-229. Residues 270–286 (HISDTSVIVKMDNSRDL) are linker 12. The segment at 287-430 (NMDCVVAEIK…ATYRRLLEGE (144 aa)) is coil 2. The tail stretch occupies residues 431 to 507 (EQRLCEGVGS…CGSSRSVRFA (77 aa)).

The protein belongs to the intermediate filament family. Heterotetramer of two type I and two type II keratins.

In Mus musculus (Mouse), this protein is Keratin, type II cuticular Hb5 (Krt85).